The primary structure comprises 423 residues: Gamma-glutamyl phosphate reductase (423 aa).

It belongs to the gamma-glutamyl phosphate reductase family.

It is found in the cytoplasm. The enzyme catalyses L-glutamate 5-semialdehyde + phosphate + NADP(+) = L-glutamyl 5-phosphate + NADPH + H(+). It participates in amino-acid biosynthesis; L-proline biosynthesis; L-glutamate 5-semialdehyde from L-glutamate: step 2/2. Catalyzes the NADPH-dependent reduction of L-glutamate 5-phosphate into L-glutamate 5-semialdehyde and phosphate. The product spontaneously undergoes cyclization to form 1-pyrroline-5-carboxylate. The polypeptide is Gamma-glutamyl phosphate reductase (Paraburkholderia phymatum (strain DSM 17167 / CIP 108236 / LMG 21445 / STM815) (Burkholderia phymatum)).